Reading from the N-terminus, the 419-residue chain is Chaperone protein dnaJ 2 (419 aa).

The J domain maps to 14–75; the sequence is KFYEILGVPK…EKREIYDQYG (62 aa). Residues 136–220 form a CR-type zinc finger; that stretch reads GTTKKLSLSR…CKGEKVVSEK (85 aa). Residues Cys-149, Cys-152, Cys-165, Cys-168, Cys-192, Cys-195, Cys-208, and Cys-211 each coordinate Zn(2+). 4 CXXCXGXG motif repeats span residues 149-156, 165-172, 192-199, and 208-215; these read CSKCNGKG, CGGCQGSG, CNDCKGTG, and CPQCKGEK. The segment covering 378-391 has biased composition (basic and acidic residues); that stretch reads TTLHDVNIEDEMKR. Residues 378–419 form a disordered region; the sequence is TTLHDVNIEDEMKRKAQAQREAYDDDEEDHPGGAQRVQCAQQ. Cys-416 is modified (cysteine methyl ester). Cys-416 carries the S-farnesyl cysteine lipid modification. The propeptide at 417-419 is removed in mature form; that stretch reads AQQ.

This sequence belongs to the DnaJ family. A/I subfamily. As to quaternary structure, homodimer. The cofactor is Zn(2+). Farnesylated. Expressed in both etiolated and light-grown tissues.

The protein resides in the membrane. Plays a continuous role in plant development probably in the structural organization of compartments. This Arabidopsis thaliana (Mouse-ear cress) protein is Chaperone protein dnaJ 2 (ATJ2).